We begin with the raw amino-acid sequence, 294 residues long: 4-hydroxy-tetrahydrodipicolinate synthase (294 aa).

Position 45 (Thr-45) interacts with pyruvate. Residue Tyr-133 is the Proton donor/acceptor of the active site. The Schiff-base intermediate with substrate role is filled by Lys-162. Ile-204 lines the pyruvate pocket.

It belongs to the DapA family. Homotetramer; dimer of dimers.

It localises to the cytoplasm. It catalyses the reaction L-aspartate 4-semialdehyde + pyruvate = (2S,4S)-4-hydroxy-2,3,4,5-tetrahydrodipicolinate + H2O + H(+). The protein operates within amino-acid biosynthesis; L-lysine biosynthesis via DAP pathway; (S)-tetrahydrodipicolinate from L-aspartate: step 3/4. Catalyzes the condensation of (S)-aspartate-beta-semialdehyde [(S)-ASA] and pyruvate to 4-hydroxy-tetrahydrodipicolinate (HTPA). This Rhizobium meliloti (strain 1021) (Ensifer meliloti) protein is 4-hydroxy-tetrahydrodipicolinate synthase.